The sequence spans 547 residues: Probable aquaporin-5 (547 aa).

Polar residues predominate over residues 1-13 (MSSSILNNRSARS). The tract at residues 1–208 (MSSSILNNRS…DPRIPPNDRR (208 aa)) is disordered. Residues 1 to 269 (MSSSILNNRS…QWMNSNFKNH (269 aa)) are Cytoplasmic-facing. Positions 15 to 32 (PAGANPAFNPPAEASSSS) are enriched in low complexity. Basic and acidic residues-rich tracts occupy residues 152–169 (EYER…DRYT) and 198–208 (DDPRIPPNDRR). A helical transmembrane segment spans residues 270–290 (FVAGVGEFIGTTMFLFFAFAG). The Extracellular segment spans residues 291-316 (TEVANIQADTTNRTTTGESTGSLNVS). N-linked (GlcNAc...) asparagine glycans are attached at residues N302 and N314. A helical transmembrane segment spans residues 317–337 (KLLYISIIFGFSLMVNVWVFF). At 338–363 (RISGGLFNPAVTMAMLMVKAISVTRA) the chain is on the cytoplasmic side. An NPA 1 motif is present at residues 345 to 347 (NPA). A helical membrane pass occupies residues 364–384 (IVLFLAQILGSMLASVVVRYL). The Extracellular segment spans residues 385 to 400 (FPETFNVRTTLGGGAS). The chain crosses the membrane as a helical span at residues 401–421 (LVQGVFIEALLTAELVFTIFM). Residues 422-428 (LAKEKHR) lie on the Cytoplasmic side of the membrane. The helical transmembrane segment at 429-449 (ATFIAPVGIGLALFIAEMVGV) threads the bilayer. Residues 450–475 (QFTGGSLNPARSFGPCVITGSFDTEH) are Extracellular-facing. Positions 457–459 (NPA) match the NPA 2 motif. Residues 476-496 (WIYWVGPAIGSLIAVCFYWFI) traverse the membrane as a helical segment. The Cytoplasmic portion of the chain corresponds to 497–547 (KTLEYEMANPGADGDDLNDPTKNPEKRAEIQASKPVPTAAFGSGKTASILS). Positions 510 to 547 (GDDLNDPTKNPEKRAEIQASKPVPTAAFGSGKTASILS) are disordered.

This sequence belongs to the MIP/aquaporin (TC 1.A.8) family.

Its subcellular location is the membrane. The catalysed reaction is H2O(in) = H2O(out). In terms of biological role, probable water channel that may have redundant functions with FgAQP3. This Gibberella zeae (strain ATCC MYA-4620 / CBS 123657 / FGSC 9075 / NRRL 31084 / PH-1) (Wheat head blight fungus) protein is Probable aquaporin-5.